The chain runs to 255 residues: MPEKPTEDARFYGRRKGKPLRATRQRLLDTMLPALTLPLAGLGEGERLDPRGLFPRPVDQLWLEIGFGGGEHLVAQAAAHPEVGLIGSEVFAYGVGKALSQIDETGVDNIRLWPEDVRQVLPALPDGCLQRLFVLFPDPWPKRRHARRRMIQPARLDDFARLLADGGELRVASDDMGYVRWTLMHVTAHPAFRWTAQGPTDWRERPADWVETRYEAKALQAGRKPAYLIFRRRPRAADPGTLAEAPAGEGADNNP.

S-adenosyl-L-methionine is bound by residues Glu-64, Glu-89, Asp-116, and Asp-138. Residue Asp-138 is part of the active site. Substrate-binding positions include Lys-142, Asp-174, and 212 to 215; that span reads TRYE.

It belongs to the class I-like SAM-binding methyltransferase superfamily. TrmB family.

The catalysed reaction is guanosine(46) in tRNA + S-adenosyl-L-methionine = N(7)-methylguanosine(46) in tRNA + S-adenosyl-L-homocysteine. It functions in the pathway tRNA modification; N(7)-methylguanine-tRNA biosynthesis. Its function is as follows. Catalyzes the formation of N(7)-methylguanine at position 46 (m7G46) in tRNA. The sequence is that of tRNA (guanine-N(7)-)-methyltransferase from Rhodospirillum rubrum (strain ATCC 11170 / ATH 1.1.1 / DSM 467 / LMG 4362 / NCIMB 8255 / S1).